Here is a 731-residue protein sequence, read N- to C-terminus: Wall-associated receptor kinase-like 5 (731 aa).

The N-terminal stretch at 1-26 (MKTKTYRFVCLVASVLTLQLMNGSSA) is a signal peptide. At 27-360 (ATPPPPPNSK…PAKPLVLQGV (334 aa)) the chain is on the extracellular side. 8 N-linked (GlcNAc...) asparagine glycosylation sites follow: Asn-37, Asn-43, Asn-73, Asn-96, Asn-124, Asn-137, Asn-236, and Asn-272. Positions 285 to 342 (CLCEYGYFSEMSYRNCYCSLGFTGNPYLRGGCIDNDDCKGPNICEEGTCVNVPGGYRC) are atypical EGF-like. Disulfide bonds link Cys-287/Cys-300, Cys-322/Cys-333, and Cys-328/Cys-342. Residues 361–381 (LLGLMGLLFLVVGTLGLIIFI) form a helical membrane-spanning segment. Residues 382–731 (KKRRRIISSR…EDQVMEISRE (350 aa)) are Cytoplasmic-facing. Positions 432-705 (FSVKRVLGKG…REASLELERI (274 aa)) constitute a Protein kinase domain. Residues 438–446 (LGKGSQGTV) and Lys-460 each bind ATP. Tyr-505 bears the Phosphotyrosine mark. The active-site Proton acceptor is the Asp-557. Phosphothreonine occurs at positions 591 and 596. The residue at position 604 (Tyr-604) is a Phosphotyrosine. The interval 709 to 731 (PEDLEAHIENDDEEDQVMEISRE) is disordered.

It belongs to the protein kinase superfamily. Ser/Thr protein kinase family. As to expression, preferentially expressed in roots and flowers.

It is found in the membrane. It catalyses the reaction L-seryl-[protein] + ATP = O-phospho-L-seryl-[protein] + ADP + H(+). The catalysed reaction is L-threonyl-[protein] + ATP = O-phospho-L-threonyl-[protein] + ADP + H(+). In terms of biological role, serine/threonine-protein kinase that may function as a signaling receptor of extracellular matrix component. May be involved in plant's response to pathogen infection. The protein is Wall-associated receptor kinase-like 5 (WAKL5) of Arabidopsis thaliana (Mouse-ear cress).